A 494-amino-acid chain; its full sequence is Hepatic triacylglycerol lipase (494 aa).

Residues 1 to 21 form the signal peptide; the sequence is MGNHLQISVSLVLCIFIQSSA. Asn-79 is a glycosylation site (N-linked (GlcNAc...) asparagine). The active-site Nucleophile is Ser-169. The active-site Charge relay system is Asp-195. Residues 255–278 are essential for determining substrate specificity; that stretch reads CHFLELYKHIAEHGLNAITQTINC. His-280 (charge relay system) is an active-site residue. The PLAT domain occupies 353-487; the sequence is YHYQFKIQFI…HPTQEKVFVK (135 aa). Asn-398 carries N-linked (GlcNAc...) asparagine glycosylation.

It belongs to the AB hydrolase superfamily. Lipase family. In terms of assembly, homodimer.

It is found in the secreted. It catalyses the reaction a triacylglycerol + H2O = a diacylglycerol + a fatty acid + H(+). It carries out the reaction a 1-acyl-sn-glycero-3-phosphocholine + H2O = sn-glycerol 3-phosphocholine + a fatty acid + H(+). The enzyme catalyses a 1,2-diacyl-sn-glycero-3-phosphocholine + H2O = a 2-acyl-sn-glycero-3-phosphocholine + a fatty acid + H(+). The catalysed reaction is 1,2-di-(9Z-octadecenoyl)-sn-glycerol + H2O = 2-(9Z-octadecenoyl)-glycerol + (9Z)-octadecenoate + H(+). It catalyses the reaction 1,2,3-tri-(9Z-octadecenoyl)-glycerol + H2O = 2,3-di-(9Z)-octadecenoyl-sn-glycerol + (9Z)-octadecenoate + H(+). It carries out the reaction 1-(9Z-octadecenoyl)-sn-glycero-3-phospho-L-serine + H2O = sn-glycero-3-phospho-L-serine + (9Z)-octadecenoate + H(+). The enzyme catalyses 1-hexadecanoyl-sn-glycero-3-phosphocholine + H2O = sn-glycerol 3-phosphocholine + hexadecanoate + H(+). The catalysed reaction is 1,3-di-(9Z-octadecenoyl)-glycerol + H2O = 3-(9Z-octadecenoyl)-sn-glycerol + (9Z)-octadecenoate + H(+). It catalyses the reaction 1,2,3-tri-(9Z-octadecenoyl)-glycerol + H2O = di-(9Z)-octadecenoylglycerol + (9Z)-octadecenoate + H(+). It carries out the reaction 1,2-di-(9Z-octadecenoyl)-sn-glycero-3-phosphocholine + H2O = (9Z-octadecenoyl)-sn-glycero-3-phosphocholine + (9Z)-octadecenoate + H(+). The enzyme catalyses 1,2,3-tributanoylglycerol + H2O = dibutanoylglycerol + butanoate + H(+). The catalysed reaction is 1,2-dihexadecanoyl-sn-glycero-3-phosphocholine + H2O = hexadecanoyl-sn-glycero-3-phosphocholine + hexadecanoate + H(+). Phospholipase A1 and lysophospholipase activities are inhibited by annexin II. Catalyzes the hydrolysis of triglycerides and phospholipids present in circulating plasma lipoproteins, including chylomicrons, intermediate density lipoproteins (IDL), low density lipoproteins (LDL) of large size and high density lipoproteins (HDL), releasing free fatty acids (FFA) and smaller lipoprotein particles. Also exhibits lysophospholipase activity. Can hydrolyze both neutral lipid and phospholipid substrates but shows a greater binding affinity for neutral lipid substrates than phospholipid substrates. In native LDL, preferentially hydrolyzes the phosphatidylcholine species containing polyunsaturated fatty acids at sn-2 position. This Rattus norvegicus (Rat) protein is Hepatic triacylglycerol lipase (Lipc).